Here is a 446-residue protein sequence, read N- to C-terminus: Neuraminidase (446 aa).

The tract at residues 13–65 (HFNQYECDSLADNQVMPCEPIIIERNITEIIYLTNTTIEKEICPKLMEYRNWS) is hypervariable stalk region. 3 N-linked (GlcNAc...) asparagine; by host glycosylation sites follow: Asn-38, Asn-47, and Asn-63. Positions 68–446 (QCKITGFAPF…DGANINFMPI (379 aa)) are head of neuraminidase. Intrachain disulfides connect Cys-69–Cys-394, Cys-101–Cys-106, Cys-160–Cys-207, Cys-209–Cys-214, Cys-255–Cys-268, Cys-257–Cys-266, Cys-295–Cys-314, and Cys-398–Cys-424. A substrate-binding site is contributed by Arg-95. Asn-123 carries an N-linked (GlcNAc...) asparagine; by host glycan. Asp-128 functions as the Proton donor/acceptor in the catalytic mechanism. Residue Arg-129 coordinates substrate. Residues Asn-177 and Asn-211 are each glycosylated (N-linked (GlcNAc...) asparagine; by host). 253-254 (EE) contributes to the substrate binding site. Arg-269 contacts substrate. Positions 270, 274, and 301 each coordinate Ca(2+). The interval 304–327 (RNNDRSSSSDCKNPNNDKGNHGVK) is disordered. Over residues 308–320 (RSSSSDCKNPNND) the composition is skewed to polar residues. Arg-348 is a substrate binding site. Asn-379 is a glycosylation site (N-linked (GlcNAc...) asparagine; by host). Tyr-383 (nucleophile) is an active-site residue.

The protein belongs to the glycosyl hydrolase 34 family. Homotetramer. The cofactor is Ca(2+). In terms of processing, N-glycosylated.

It is found in the virion membrane. The protein resides in the host apical cell membrane. It catalyses the reaction Hydrolysis of alpha-(2-&gt;3)-, alpha-(2-&gt;6)-, alpha-(2-&gt;8)- glycosidic linkages of terminal sialic acid residues in oligosaccharides, glycoproteins, glycolipids, colominic acid and synthetic substrates.. Inhibited by the neuraminidase inhibitors zanamivir (Relenza) and oseltamivir (Tamiflu). These drugs interfere with the release of progeny virus from infected cells and are effective against all influenza strains. Resistance to neuraminidase inhibitors is quite rare. Its function is as follows. Catalyzes the removal of terminal sialic acid residues from viral and cellular glycoconjugates. Cleaves off the terminal sialic acids on the glycosylated HA during virus budding to facilitate virus release. Additionally helps virus spread through the circulation by further removing sialic acids from the cell surface. These cleavages prevent self-aggregation and ensure the efficient spread of the progeny virus from cell to cell. Otherwise, infection would be limited to one round of replication. Described as a receptor-destroying enzyme because it cleaves a terminal sialic acid from the cellular receptors. May facilitate viral invasion of the upper airways by cleaving the sialic acid moieties on the mucin of the airway epithelial cells. Likely to plays a role in the budding process through its association with lipid rafts during intracellular transport. May additionally display a raft-association independent effect on budding. Plays a role in the determination of host range restriction on replication and virulence. Sialidase activity in late endosome/lysosome traffic seems to enhance virus replication. This Influenza A virus (strain A/Swine/Hong Kong/127/1982 H3N2) protein is Neuraminidase.